Here is a 283-residue protein sequence, read N- to C-terminus: Thymidylate synthase (283 aa).

R22 contacts dUMP. C160 serves as the catalytic Nucleophile. DUMP-binding positions include 180 to 183, N191, and 221 to 223; these read RSCD and HIY. D183 lines the (6R)-5,10-methylene-5,6,7,8-tetrahydrofolate pocket. S282 is a (6R)-5,10-methylene-5,6,7,8-tetrahydrofolate binding site.

This sequence belongs to the thymidylate synthase family. Bacterial-type ThyA subfamily. As to quaternary structure, homodimer.

Its subcellular location is the cytoplasm. It catalyses the reaction dUMP + (6R)-5,10-methylene-5,6,7,8-tetrahydrofolate = 7,8-dihydrofolate + dTMP. Its pathway is pyrimidine metabolism; dTTP biosynthesis. Catalyzes the reductive methylation of 2'-deoxyuridine-5'-monophosphate (dUMP) to 2'-deoxythymidine-5'-monophosphate (dTMP) while utilizing 5,10-methylenetetrahydrofolate (mTHF) as the methyl donor and reductant in the reaction, yielding dihydrofolate (DHF) as a by-product. This enzymatic reaction provides an intracellular de novo source of dTMP, an essential precursor for DNA biosynthesis. The sequence is that of Thymidylate synthase from Mannheimia succiniciproducens (strain KCTC 0769BP / MBEL55E).